A 460-amino-acid chain; its full sequence is Ribosomal protein uS12 methylthiotransferase RimO (460 aa).

The MTTase N-terminal domain maps to 16–130 (NKIHFISLGC…ILSAIESKEA (115 aa)). [4Fe-4S] cluster contacts are provided by cysteine 25, cysteine 61, cysteine 93, cysteine 164, cysteine 168, and cysteine 171. The Radical SAM core domain occupies 150–382 (STPKHYAYLK…SQTQKKNVEK (233 aa)). A TRAM domain is found at 385–455 (KQLVGQIVEA…GYDLVGRVIK (71 aa)).

It belongs to the methylthiotransferase family. RimO subfamily. Requires [4Fe-4S] cluster as cofactor.

It localises to the cytoplasm. The catalysed reaction is L-aspartate(89)-[ribosomal protein uS12]-hydrogen + (sulfur carrier)-SH + AH2 + 2 S-adenosyl-L-methionine = 3-methylsulfanyl-L-aspartate(89)-[ribosomal protein uS12]-hydrogen + (sulfur carrier)-H + 5'-deoxyadenosine + L-methionine + A + S-adenosyl-L-homocysteine + 2 H(+). Its function is as follows. Catalyzes the methylthiolation of an aspartic acid residue of ribosomal protein uS12. In Chlamydia caviae (strain ATCC VR-813 / DSM 19441 / 03DC25 / GPIC) (Chlamydophila caviae), this protein is Ribosomal protein uS12 methylthiotransferase RimO.